We begin with the raw amino-acid sequence, 196 residues long: Pro-FMRFamide-related neuropeptide VF (196 aa).

Positions 1 to 21 (MEIISLKRFILLMLATSSLLT) are cleaved as a signal peptide. Residues 22-57 (SNIFCTDESRMPNLYSKKNYDKYSEPRGDLGWEKER) constitute a propeptide that is removed on maturation. Phe-92 bears the Phenylalanine amide mark. 2 propeptides span residues 95 to 99 (NMEEE) and 115 to 121 (NREDSLS). At Phe-131 the chain carries Phenylalanine amide. A propeptide spanning residues 134–196 (TTTAKSITKT…IDDAELKQEK (63 aa)) is cleaved from the precursor.

The protein belongs to the FARP (FMRFamide related peptide) family.

Its subcellular location is the secreted. Its function is as follows. Efficiently inhibits forskolin-induced production of cAMP. Acts as a potent negative regulator of gonadotropin synthesis and secretion. Induces secretion of prolactin. Functionally, efficiently inhibits forskolin-induced production of cAMP. Blocks morphine-induced analgesia. Shows no inhibitory activity of forskolin-induced production of cAMP. The chain is Pro-FMRFamide-related neuropeptide VF (NPVF) from Bos taurus (Bovine).